The primary structure comprises 335 residues: Syntaxin-18 (335 aa).

Over 1–309 (MAVDITLLFR…EDIREAIKNN (309 aa)) the chain is Cytoplasmic. The span at 168–208 (KLEPEPNTKTRESTSSEKVSRSPSKDSEENPATEERPEKIL) shows a compositional bias: basic and acidic residues. Positions 168–226 (KLEPEPNTKTRESTSSEKVSRSPSKDSEENPATEERPEKILAETQPELGTWGDGKGEDE) are disordered. Residues 243–305 (IGEMNSLFDE…KEGNEDIREA (63 aa)) enclose the t-SNARE coiled-coil homology domain. A helical; Anchor for type IV membrane protein membrane pass occupies residues 310–330 (AGFRVWILFFLVMCSFSLLFL). Over 331-335 (DWYDS) the chain is Vesicular.

Belongs to the syntaxin family. In terms of assembly, component of a SNARE complex consisting of STX18, USE1L, BNIP1/SEC20L, and SEC22B. RINT1/TIP20L and ZW10 are associated with the complex through interaction with BNIP1/SEC20L. Interacts directly with USE1L and BNIP1/SEC20L.

The protein resides in the endoplasmic reticulum membrane. The protein localises to the golgi apparatus membrane. Functionally, syntaxin that may be involved in targeting and fusion of Golgi-derived retrograde transport vesicles with the ER. This chain is Syntaxin-18 (STX18), found in Pongo abelii (Sumatran orangutan).